Reading from the N-terminus, the 1082-residue chain is Error-prone DNA polymerase (1082 aa).

This sequence belongs to the DNA polymerase type-C family. DnaE2 subfamily.

It localises to the cytoplasm. The enzyme catalyses DNA(n) + a 2'-deoxyribonucleoside 5'-triphosphate = DNA(n+1) + diphosphate. In terms of biological role, DNA polymerase involved in damage-induced mutagenesis and translesion synthesis (TLS). It is not the major replicative DNA polymerase. The protein is Error-prone DNA polymerase of Xanthomonas campestris pv. campestris (strain 8004).